The sequence spans 478 residues: Transposon Ty1-H Gag polyprotein (478 aa).

Polar residues-rich tracts occupy residues 1 to 10, 48 to 60, and 127 to 152; these read MESQQLSNYP, TKANSQQTTTPAS, and QSQFPQYPSSVGTPLSTPSPESGNTF. Disordered regions lie at residues 1–84, 126–174, and 390–478; these read MESQ…QNGP, PQSQ…PPPM, and GSRN…PETY. Positions 153-165 are enriched in low complexity; that stretch reads TDSSSADSDMTST. An RNA-binding region spans residues 337-439; the sequence is NNGIHINNKV…NSKSKTARAH (103 aa). Positions 440–456 are enriched in low complexity; that stretch reads NVSTSNNSPSTDNDSIS. The span at 457–466 shows a compositional bias: polar residues; sequence KSTTEPIQLN. Basic and acidic residues predominate over residues 467-478; the sequence is NKHDLHLRPETY.

As to quaternary structure, homotrimer.

It is found in the cytoplasm. Functionally, capsid protein (CA) is the structural component of the virus-like particle (VLP), forming the shell that encapsulates the retrotransposons dimeric RNA genome. The particles are assembled from trimer-clustered units and there are holes in the capsid shells that allow for the diffusion of macromolecules. CA also has nucleocapsid-like chaperone activity, promoting primer tRNA(i)-Met annealing to the multipartite primer-binding site (PBS), dimerization of Ty1 RNA and initiation of reverse transcription. This is Transposon Ty1-H Gag polyprotein (TY1A-H) from Saccharomyces cerevisiae (strain ATCC 204508 / S288c) (Baker's yeast).